A 499-amino-acid polypeptide reads, in one-letter code: Catalase (499 aa).

The tract at residues 1 to 25 (MTDRPIMTTSAGAPIPDNQNSLTAG) is disordered. Residues 7 to 23 (MTTSAGAPIPDNQNSLT) are compositionally biased toward polar residues. Catalysis depends on residues His55 and Asn127. Tyr337 lines the heme pocket.

It belongs to the catalase family. As to quaternary structure, homotetramer. Requires heme as cofactor.

Its subcellular location is the periplasm. The enzyme catalyses 2 H2O2 = O2 + 2 H2O. Functionally, decomposes hydrogen peroxide into water and oxygen; serves to protect cells from the toxic effects of hydrogen peroxide. This Brucella abortus biovar 1 (strain 9-941) protein is Catalase (katA).